A 344-amino-acid polypeptide reads, in one-letter code: MLAITALAGLDLAQWQALLNNVAFAVCLGAMLFYWGGAAFPQVQLLSELGLAGMIGANLTIAALLTARWIDAGYFPLSNLYESLFFLAWGITALHLLALHWTRSRWVGVTTAPLATGVVAFAALALPADMQEAQPLVPALQSNWLMMHVTVMLLAYAALLVGSLLAIAFLIVTRGQEVQLKGNSLGLQFGPSQPATHPEWTEATLPSPAAELVYAGIRSPRPAEPPPQPAPEGIPLQRLSLAEILDNTSYRLIGLGFPLLTIGIIAGAVWANEAWGTYWSWDPKETWALITWLVFAAYLHARITKGWQGKRPALLASLGFGVVWVCYLGVNFLGKGLHSYGWFF.

The next 8 helical transmembrane spans lie at 21–41 (NVAF…AAFP), 45–65 (LLSE…AALL), 80–100 (LYES…LALH), 106–126 (WVGV…ALAL), 151–171 (VMLL…AFLI), 252–272 (LIGL…VWAN), 287–307 (WALI…TKGW), and 313–333 (ALLA…VNFL).

It belongs to the CcmF/CycK/Ccl1/NrfE/CcsA family. In terms of assembly, may interact with ccs1.

Its subcellular location is the cellular thylakoid membrane. Functionally, required during biogenesis of c-type cytochromes (cytochrome c6 and cytochrome f) at the step of heme attachment. This is Cytochrome c biogenesis protein CcsA from Synechococcus sp. (strain JA-3-3Ab) (Cyanobacteria bacterium Yellowstone A-Prime).